Consider the following 664-residue polypeptide: Frizzled-3 (664 aa).

Positions 1 to 16 (MAAYLISFIWVSVILA) are cleaved as a signal peptide. The Extracellular segment spans residues 17–204 (QKSMGHSLFA…REELSFARYF (188 aa)). One can recognise an FZ domain in the interval 22-135 (HSLFACEPIT…CSRFPDCDEP (114 aa)). 5 disulfides stabilise this stretch: Cys-27–Cys-88, Cys-35–Cys-81, Cys-72–Cys-109, Cys-98–Cys-132, and Cys-102–Cys-126. N-linked (GlcNAc...) asparagine glycosylation is present at Asn-41. Residues 205–225 (IGVISIVCLSATLFTFLTFLI) form a helical membrane-spanning segment. Topologically, residues 226–236 (DVTRFRYPERP) are cytoplasmic. The chain crosses the membrane as a helical span at residues 237–257 (IIFYAVCYMMVSLIFFIGFLL). Residues 258-287 (EDKVACNGANPSQYKASTVTQGSHNKACTM) lie on the Extracellular side of the membrane. The chain crosses the membrane as a helical span at residues 288 to 308 (LFMVLYFFTMAGSVWWVILTI). Residues 309–327 (TWFLAAVPKWGSEAIEKKA) lie on the Cytoplasmic side of the membrane. The chain crosses the membrane as a helical span at residues 328-348 (LLFHASAWGIPGTLTIILLAM). The Extracellular portion of the chain corresponds to 349 to 373 (NKIEGDNISGVCFVGLYDVHALRYF). Residue Asn-355 is glycosylated (N-linked (GlcNAc...) asparagine). Residues 374 to 394 (VLAPLCLDVVVGVSLLLAGII) form a helical membrane-spanning segment. Residues 395 to 419 (SLNRVRIEIPLEKENQDKLVKFMIR) are Cytoplasmic-facing. Residues 420 to 440 (IGVFSILYLVPLLVVIGCYFY) form a helical membrane-spanning segment. Residues 441–476 (EQAYRGVWETTWVQERCREYHIPCPYKVTQTSRPDL) lie on the Extracellular side of the membrane. A helical membrane pass occupies residues 477–497 (ILFLMKYLMLLVVGIPSVFWV). Residues 498-664 (GSKKTCFEWA…RVIEADATSA (167 aa)) are Cytoplasmic-facing. The Lys-Thr-X-X-X-Trp motif, mediates interaction with the PDZ domain of Dvl family members motif lies at 501–506 (KTCFEW). A disordered region spans residues 537–664 (RDPNTPIVRK…RVIEADATSA (128 aa)). 2 stretches are compositionally biased toward polar residues: residues 549-564 (GTST…STQL) and 573-585 (KAGS…SSYH).

The protein belongs to the G-protein coupled receptor Fz/Smo family. Expression restricted to the early nervous system.

It localises to the membrane. The protein resides in the cell membrane. It is found in the cell surface. The protein localises to the apical cell membrane. In terms of biological role, receptor for Wnt proteins. Most of frizzled receptors are coupled to the beta-catenin canonical signaling pathway, which leads to the activation of disheveled proteins, inhibition of GSK-3 kinase, nuclear accumulation of beta-catenin and activation of Wnt target genes. A second signaling pathway involving PKC and calcium fluxes has been seen for some family members, but it is not yet clear if it represents a distinct pathway or if it can be integrated in the canonical pathway, as PKC seems to be required for Wnt-mediated inactivation of GSK-3 kinase. Both pathways seem to involve interactions with G-proteins. Activated by Wnt8. Involved in transduction and intercellular transmission of polarity information during tissue morphogenesis and/or in differentiated tissues. Plays a role in controlling early axon growth and guidance processes necessary for the formation of a subset of central and peripheral major fiber tracts. Involved in the migration of cranial neural crest cells. May also be implicated in the transmission of sensory information from the trunk and limbs to the brain. Controls commissural sensory axons guidance after midline crossing along the anterior-posterior axis in the developing spinal cord in a Wnt-dependent signaling pathway. Together with FZD6, is involved in the neural tube closure and plays a role in the regulation of the establishment of planar cell polarity (PCP). Promotes neurogenesis by maintaining sympathetic neuroblasts within the cell cycle in a beta-catenin-dependent manner. This is Frizzled-3 (fzd3) from Xenopus laevis (African clawed frog).